We begin with the raw amino-acid sequence, 346 residues long: Dihydroorotase (346 aa).

Residues H14 and H16 each coordinate Zn(2+). Residues H16–R18 and N42 each bind substrate. The Zn(2+) site is built by K100, H137, and H175. K100 bears the N6-carboxylysine mark. H137 contributes to the substrate binding site. L220 serves as a coordination point for substrate. D248 is a Zn(2+) binding site. D248 is a catalytic residue. Positions 252 and 264 each coordinate substrate.

It belongs to the metallo-dependent hydrolases superfamily. DHOase family. Class II DHOase subfamily. As to quaternary structure, homodimer. The cofactor is Zn(2+).

The enzyme catalyses (S)-dihydroorotate + H2O = N-carbamoyl-L-aspartate + H(+). The protein operates within pyrimidine metabolism; UMP biosynthesis via de novo pathway; (S)-dihydroorotate from bicarbonate: step 3/3. In terms of biological role, catalyzes the reversible cyclization of carbamoyl aspartate to dihydroorotate. The polypeptide is Dihydroorotase (Novosphingobium aromaticivorans (strain ATCC 700278 / DSM 12444 / CCUG 56034 / CIP 105152 / NBRC 16084 / F199)).